Here is a 309-residue protein sequence, read N- to C-terminus: UPF0282 protein Saci_0277 (309 aa).

Belongs to the UPF0282 family.

The polypeptide is UPF0282 protein Saci_0277 (Sulfolobus acidocaldarius (strain ATCC 33909 / DSM 639 / JCM 8929 / NBRC 15157 / NCIMB 11770)).